Here is a 210-residue protein sequence, read N- to C-terminus: Calcium-activated potassium channel subunit beta-4 (210 aa).

At Met-1 to Arg-19 the chain is on the cytoplasmic side. A helical transmembrane segment spans residues Leu-20 to Leu-40. Over Ser-41–Glu-167 the chain is Extracellular. N-linked (GlcNAc...) asparagine glycans are attached at residues Asn-53 and Asn-90. Residues Ile-168 to Val-188 traverse the membrane as a helical segment. At Val-189–Ser-210 the chain is on the cytoplasmic side.

Belongs to the KCNMB (TC 8.A.14.1) family. KCNMB4 subfamily. As to quaternary structure, interacts with KCNMA1 tetramer. There are probably 4 molecules of KCMNB4 per KCNMA1 tetramer. Interacts with FMR1 (via N-terminus). In terms of processing, phosphorylated. Phosphorylation modulates its effect on KCNMA1 activation kinetics. Post-translationally, N-glycosylated. A highly glycosylated form is promoted by KCNMA1. Glycosylation, which is not required for the interaction with KCNMA1 and subcellular location, increases protection against charybdotoxin.

It localises to the membrane. Regulatory subunit of the calcium activated potassium KCNMA1 (maxiK) channel. Modulates the calcium sensitivity and gating kinetics of KCNMA1, thereby contributing to KCNMA1 channel diversity. Decreases the gating kinetics and calcium sensitivity of the KCNMA1 channel, but with fast deactivation kinetics. May decrease KCNMA1 channel openings at low calcium concentrations but increases channel openings at high calcium concentrations. Makes KCNMA1 channel resistant to 100 nM charybdotoxin (CTX) toxin concentrations. The protein is Calcium-activated potassium channel subunit beta-4 (Kcnmb4) of Rattus norvegicus (Rat).